A 195-amino-acid polypeptide reads, in one-letter code: MRVAEVTRNTSETQIRVSLNLDGTGRQKLASGVPFLDHMLDQIARHGMFDLEVEATGDTHIDDHHTVEDVGITLGQAVARAIGDKKGITRYGHSYVPLDECLSRVVIDFSGRPGLEFHVPFTRARVGSFDVDLTIEFFRGFVNHAGVTLHIDNIRGINAHHQCETVFKAFGRALRMAVELDPRAANTIPSTKGTL.

This sequence belongs to the imidazoleglycerol-phosphate dehydratase family.

It is found in the cytoplasm. The catalysed reaction is D-erythro-1-(imidazol-4-yl)glycerol 3-phosphate = 3-(imidazol-4-yl)-2-oxopropyl phosphate + H2O. It participates in amino-acid biosynthesis; L-histidine biosynthesis; L-histidine from 5-phospho-alpha-D-ribose 1-diphosphate: step 6/9. The protein is Imidazoleglycerol-phosphate dehydratase of Cupriavidus metallidurans (strain ATCC 43123 / DSM 2839 / NBRC 102507 / CH34) (Ralstonia metallidurans).